The sequence spans 321 residues: S-methyl-5'-thioadenosine phosphorylase (321 aa).

Phosphate is bound by residues Thr-30, 73–74 (RH), and 106–107 (SA). Met-215 lines the substrate pocket. Residue Ser-216 participates in phosphate binding. A substrate-binding site is contributed by 239–241 (DYD).

The protein belongs to the PNP/MTAP phosphorylase family. MTAP subfamily. As to quaternary structure, homotrimer.

The protein resides in the cytoplasm. It is found in the nucleus. The enzyme catalyses S-methyl-5'-thioadenosine + phosphate = 5-(methylsulfanyl)-alpha-D-ribose 1-phosphate + adenine. Its pathway is amino-acid biosynthesis; L-methionine biosynthesis via salvage pathway; S-methyl-5-thio-alpha-D-ribose 1-phosphate from S-methyl-5'-thioadenosine (phosphorylase route): step 1/1. In terms of biological role, catalyzes the reversible phosphorylation of S-methyl-5'-thioadenosine (MTA) to adenine and 5-methylthioribose-1-phosphate. Involved in the breakdown of MTA, a major by-product of polyamine biosynthesis. Responsible for the first step in the methionine salvage pathway after MTA has been generated from S-adenosylmethionine. Has broad substrate specificity with 6-aminopurine nucleosides as preferred substrates. The chain is S-methyl-5'-thioadenosine phosphorylase from Yarrowia lipolytica (strain CLIB 122 / E 150) (Yeast).